The following is a 1283-amino-acid chain: Peroxisomal ATPase PEX1 (1283 aa).

The interval 346–367 is disordered; sequence SKTKQNVLSPEKEKQMSEPLDQ. Residue Ser354 is modified to Phosphoserine. Positions 355–367 are enriched in basic and acidic residues; that stretch reads PEKEKQMSEPLDQ. Residues 599-606 and 881-888 each bind ATP; these read GGKGSGKS and GPPGTGKT. A phosphoserine mark is found at Ser1181, Ser1209, and Ser1211. The segment at 1260-1283 is disordered; it reads FQNPKRRKNQSGTMFRPGQKVTLA.

Belongs to the AAA ATPase family. As to quaternary structure, homooligomer; homooligomerizes in the cytosol, interaction with PEX6 promotes dissociation of the homooligomer. Interacts with PEX6; forming the PEX1-PEX6 AAA ATPase complex, which is composed of a heterohexamer formed by a trimer of PEX1-PEX6 dimers. Interacts indirectly with PEX26, via its interaction with PEX6.

Its subcellular location is the cytoplasm. The protein resides in the cytosol. It localises to the peroxisome membrane. It carries out the reaction ATP + H2O = ADP + phosphate + H(+). Component of the PEX1-PEX6 AAA ATPase complex, a protein dislocase complex that mediates the ATP-dependent extraction of the PEX5 receptor from peroxisomal membranes, an essential step for PEX5 recycling. Specifically recognizes PEX5 monoubiquitinated at 'Cys-11', and pulls it out of the peroxisome lumen through the PEX2-PEX10-PEX12 retrotranslocation channel. Extraction by the PEX1-PEX6 AAA ATPase complex is accompanied by unfolding of the TPR repeats and release of bound cargo from PEX5. The sequence is that of Peroxisomal ATPase PEX1 from Homo sapiens (Human).